The chain runs to 528 residues: Na(+)/H(+) antiporter NhaB (528 aa).

The next 10 helical transmembrane spans lie at 25 to 47 (IISF…GWLL), 66 to 86 (PGGL…SQVL), 97 to 117 (LLLV…LFVF), 130 to 164 (VSLL…FYSI), 241 to 261 (IRMS…CFLV), 304 to 324 (AFIG…VGLI), 351 to 371 (ALPF…IIDL), 390 to 410 (LVVF…VFVG), 448 to 468 (ATPN…APLI), and 476 to 496 (VWMA…AIQL).

It belongs to the NhaB Na(+)/H(+) (TC 2.A.34) antiporter family.

It is found in the cell inner membrane. The catalysed reaction is 2 Na(+)(in) + 3 H(+)(out) = 2 Na(+)(out) + 3 H(+)(in). Its function is as follows. Na(+)/H(+) antiporter that extrudes sodium in exchange for external protons. The polypeptide is Na(+)/H(+) antiporter NhaB (Shewanella halifaxensis (strain HAW-EB4)).